The following is a 434-amino-acid chain: Glutamyl-tRNA reductase (434 aa).

Substrate contacts are provided by residues 52–55 (TCNR), Ser115, 120–122 (ETQ), and Gln126. The active-site Nucleophile is Cys53. NADP(+) is bound at residue 195–200 (GAGEMI).

The protein belongs to the glutamyl-tRNA reductase family. In terms of assembly, homodimer.

The enzyme catalyses (S)-4-amino-5-oxopentanoate + tRNA(Glu) + NADP(+) = L-glutamyl-tRNA(Glu) + NADPH + H(+). It participates in porphyrin-containing compound metabolism; protoporphyrin-IX biosynthesis; 5-aminolevulinate from L-glutamyl-tRNA(Glu): step 1/2. Catalyzes the NADPH-dependent reduction of glutamyl-tRNA(Glu) to glutamate 1-semialdehyde (GSA). In Cupriavidus pinatubonensis (strain JMP 134 / LMG 1197) (Cupriavidus necator (strain JMP 134)), this protein is Glutamyl-tRNA reductase.